The primary structure comprises 706 residues: Zinc finger and BTB domain-containing protein 17 (706 aa).

The BTB domain occupies 1–12 (LKSLTVLAESPV). Residues 32–194 (TAARVTQGDS…LLRSGTYSDR (163 aa)) are disordered. A compositionally biased stretch (basic and acidic residues) spans 67–78 (EPAEQPDAKEGP). Positions 90 to 106 (AAEASPAAVSPSRPQPA) are enriched in low complexity. Acidic residues predominate over residues 134–148 (GKEEEGEAMVEDEEE). Over residues 170-182 (SGSTDSGQENSGE) the composition is skewed to polar residues. 13 consecutive C2H2-type zinc fingers follow at residues 205-227 (HKCE…IRIH), 233-255 (FSCR…EKTH), 261-283 (YGCE…KKRH), 289-311 (YRCD…QLVH), 317-339 (YQCD…LETH), 345-367 (HKCP…LKIH), 373-395 (LKCR…LRIH), 401-423 (YVCV…VPIH), 427-450 (KPCQ…HVRH), 457-479 (YVCE…IRHH), 485-507 (HKCT…IIIH), 513-536 (FLCD…KTVH), and 618-640 (YACD…VRIH). The segment at 680–706 (PRDSPQEAPAAPLAPVPLAGEGQAPAE) is disordered. Residues 687–698 (APAAPLAPVPLA) show a composition bias toward low complexity.

The protein belongs to the krueppel C2H2-type zinc-finger protein family.

Its subcellular location is the nucleus. Functionally, transcription factor that can function as an activator or repressor depending on its binding partners, and by targeting negative regulators of cell cycle progression. Plays a critical role in early lymphocyte development, where it is essential to prevent apoptosis in lymphoid precursors, allowing them to survive in response to IL7 and undergo proper lineage commitment. Has been shown to bind to the promoters of adenovirus major late protein and cyclin D1 and activate transcription. Required for early embryonic development during gastrulation. Represses RB1 transcription. The polypeptide is Zinc finger and BTB domain-containing protein 17 (ZBTB17) (Gallus gallus (Chicken)).